The sequence spans 104 residues: Ribonuclease P protein component 4 (104 aa).

Residues Cys-57, Cys-60, Cys-83, and Cys-86 each contribute to the Zn(2+) site.

The protein belongs to the eukaryotic/archaeal RNase P protein component 4 family. In terms of assembly, consists of a catalytic RNA component and at least 4-5 protein subunits. Zn(2+) serves as cofactor.

Its subcellular location is the cytoplasm. It catalyses the reaction Endonucleolytic cleavage of RNA, removing 5'-extranucleotides from tRNA precursor.. Its function is as follows. Part of ribonuclease P, a protein complex that generates mature tRNA molecules by cleaving their 5'-ends. The chain is Ribonuclease P protein component 4 from Saccharolobus islandicus (strain L.S.2.15 / Lassen #1) (Sulfolobus islandicus).